Consider the following 359-residue polypeptide: Histamine H2 receptor (359 aa).

Residues 1-22 lie on the Extracellular side of the membrane; sequence MAFNGTVPSFCMDFTVYKVTIS. Asn-4 carries an N-linked (GlcNAc...) asparagine glycan. Residues 23–44 form a helical membrane-spanning segment; it reads VILIILILVTVAGNVVVCLAVG. The Cytoplasmic segment spans residues 45-57; the sequence is LNRRLRSLTNCFI. The chain crosses the membrane as a helical span at residues 58 to 81; that stretch reads VSLAVTDLLLGLLVLPFSAIYQLS. Residues 82–92 are Extracellular-facing; that stretch reads CKWSFSKVFCN. Cys-91 and Cys-174 are disulfide-bonded. A helical transmembrane segment spans residues 93–114; the sequence is IYTSLDVMLCTASILNLFMISL. The Cytoplasmic portion of the chain corresponds to 115–134; the sequence is DRYCAVTDPLRYPVLITPAR. A helical transmembrane segment spans residues 135–159; sequence VAISLVFIWVISITLSFLSIHLGWN. Residues 160-180 are Extracellular-facing; sequence SRNETSKDNDTIVKCKVQVNE. Residues 181–204 form a helical membrane-spanning segment; that stretch reads VYGLVDGLVTFYLPLLIMCITYFR. At 205–234 the chain is on the cytoplasmic side; it reads IFKIAREQARRINHIGSWKAATIREHKATV. The chain crosses the membrane as a helical span at residues 235 to 258; it reads TLAAVMGAFIICWFPYFTVFVYRG. Topologically, residues 259-267 are extracellular; it reads LKGDDAVNE. A helical membrane pass occupies residues 268–289; that stretch reads VFEDVVLWLGYANSALNPILYA. Residues 290–359 are Cytoplasmic-facing; it reads ALNRDFRTAY…VTAPQGATNR (70 aa). Cys-305 is lipidated: S-palmitoyl cysteine.

Belongs to the G-protein coupled receptor 1 family.

The protein resides in the cell membrane. Its function is as follows. The H2 subclass of histamine receptors mediates gastric acid secretion. The activity of this receptor is mediated by G proteins which activate adenylyl cyclase. The chain is Histamine H2 receptor (HRH2) from Cavia porcellus (Guinea pig).